A 155-amino-acid chain; its full sequence is Probable jacalin-related lectin 26 (155 aa).

2 helical membrane-spanning segments follow: residues 26–48 (AYLY…IAMI) and 127–149 (VSFV…VLFL). The Jacalin-type lectin domain maps to 47–155 (MIRAGSVGKK…VLFLMKFKRS (109 aa)).

This sequence belongs to the jacalin lectin family.

The protein localises to the membrane. In Arabidopsis thaliana (Mouse-ear cress), this protein is Probable jacalin-related lectin 26 (JAL26).